The chain runs to 327 residues: Phenylalanine--tRNA ligase alpha subunit (327 aa).

Glu-252 provides a ligand contact to Mg(2+).

Belongs to the class-II aminoacyl-tRNA synthetase family. Phe-tRNA synthetase alpha subunit type 1 subfamily. In terms of assembly, tetramer of two alpha and two beta subunits. Mg(2+) is required as a cofactor.

Its subcellular location is the cytoplasm. It carries out the reaction tRNA(Phe) + L-phenylalanine + ATP = L-phenylalanyl-tRNA(Phe) + AMP + diphosphate + H(+). The chain is Phenylalanine--tRNA ligase alpha subunit from Aeromonas hydrophila subsp. hydrophila (strain ATCC 7966 / DSM 30187 / BCRC 13018 / CCUG 14551 / JCM 1027 / KCTC 2358 / NCIMB 9240 / NCTC 8049).